A 351-amino-acid chain; its full sequence is Probable dual-specificity RNA methyltransferase RlmN (351 aa).

The Proton acceptor role is filled by E102. One can recognise a Radical SAM core domain in the interval 110–339; the sequence is DGGRKTICIS…ILNRRSPGKD (230 aa). C117 and C344 form a disulfide bridge. C124, C128, and C131 together coordinate [4Fe-4S] cluster. Residues 171-172, S203, 226-228, and N302 contribute to the S-adenosyl-L-methionine site; these read GE and SLN. The S-methylcysteine intermediate role is filled by C344.

The protein belongs to the radical SAM superfamily. RlmN family. [4Fe-4S] cluster serves as cofactor.

The protein localises to the cytoplasm. The enzyme catalyses adenosine(2503) in 23S rRNA + 2 reduced [2Fe-2S]-[ferredoxin] + 2 S-adenosyl-L-methionine = 2-methyladenosine(2503) in 23S rRNA + 5'-deoxyadenosine + L-methionine + 2 oxidized [2Fe-2S]-[ferredoxin] + S-adenosyl-L-homocysteine. It carries out the reaction adenosine(37) in tRNA + 2 reduced [2Fe-2S]-[ferredoxin] + 2 S-adenosyl-L-methionine = 2-methyladenosine(37) in tRNA + 5'-deoxyadenosine + L-methionine + 2 oxidized [2Fe-2S]-[ferredoxin] + S-adenosyl-L-homocysteine. In terms of biological role, specifically methylates position 2 of adenine 2503 in 23S rRNA and position 2 of adenine 37 in tRNAs. The chain is Probable dual-specificity RNA methyltransferase RlmN from Leptospira borgpetersenii serovar Hardjo-bovis (strain JB197).